The following is a 328-amino-acid chain: Probable fused nickel transport protein LarMN (328 aa).

Helical transmembrane passes span 8 to 28 (LSPA…TVAV), 42 to 62 (LPML…NLPI), 75 to 95 (LLAV…TLLL), 103 to 123 (GGIL…PFVG), 138 to 158 (LGLA…AGIE), 187 to 207 (MLTA…LLVF), 229 to 249 (PWIA…LASN), and 296 to 316 (PVSV…LLLI).

The protein belongs to the CbiM family. NikM subfamily. As to quaternary structure, may form an energy-coupling factor (ECF) transporter complex composed of an ATP-binding protein (A component, LarO), a transmembrane protein (T component, LarQ) and a fused possible substrate-capture protein (S component, LarMN) of unknown stoichiometry.

It is found in the cell membrane. Probably part of the energy-coupling factor (ECF) transporter complex LarMNQO involved in nickel import. This Lactiplantibacillus plantarum (strain ATCC BAA-793 / NCIMB 8826 / WCFS1) (Lactobacillus plantarum) protein is Probable fused nickel transport protein LarMN.